A 511-amino-acid chain; its full sequence is MTPTIKPLVLLILDGWGYREDAPDNAIAKANTPVMDRLWEKYPHCLVDGSGGAVGLPDGQMGNSEVGHVNLGAGRIVYQDFTRISKAISDRSFFSNTILCDALKKAKAAKGAVHIMGLLSAGGVHSHEDHLVAMIEMAVEQGAEDVYLHAFLDGRDTPPKSALPSIERFEALFARLGKGRFATLSGRFFAMDRDKRWERIEQSYKAVYHGLSGVTSANATDAVENAYERGETDEFVTPVVIGQPAPIANGDSVFFMNFRADRAREMTQAFVDKDFDGFDRGSRADISEFVMLTQYADTLEAPSAFPPEPLNNVLGEWLAKHDKTQLRISETEKYAHVTFFFSGGREQEFEGEKRVLIPSPKVKTYDLQPEMSSEQLTDELVAAIESQAFDVVICNYPNGDMVGHTGNFDAAVKACEAVDHSVGRVVSALEAVGGECLITADHGNAEQMSDATTGQAHTAHTNELVPFIYVGRPAKARNGRLSDVAPTILHLIGMEQPDEMTGTSLMTLEQD.

Positions 14 and 64 each coordinate Mn(2+). Ser64 serves as the catalytic Phosphoserine intermediate. Substrate contacts are provided by residues His125, 155-156, Arg187, Arg193, 259-262, and Lys333; these read RD and RADR. Positions 400, 404, 441, 442, and 460 each coordinate Mn(2+).

Belongs to the BPG-independent phosphoglycerate mutase family. In terms of assembly, monomer. It depends on Mn(2+) as a cofactor.

The catalysed reaction is (2R)-2-phosphoglycerate = (2R)-3-phosphoglycerate. It participates in carbohydrate degradation; glycolysis; pyruvate from D-glyceraldehyde 3-phosphate: step 3/5. Functionally, catalyzes the interconversion of 2-phosphoglycerate and 3-phosphoglycerate. The polypeptide is 2,3-bisphosphoglycerate-independent phosphoglycerate mutase (Idiomarina loihiensis (strain ATCC BAA-735 / DSM 15497 / L2-TR)).